The chain runs to 275 residues: Putative phosphoenolpyruvate synthase regulatory protein (275 aa).

157–164 contacts ADP; it reads GVSRCGKT.

Belongs to the pyruvate, phosphate/water dikinase regulatory protein family. PSRP subfamily.

The enzyme catalyses [pyruvate, water dikinase] + ADP = [pyruvate, water dikinase]-phosphate + AMP + H(+). It catalyses the reaction [pyruvate, water dikinase]-phosphate + phosphate + H(+) = [pyruvate, water dikinase] + diphosphate. In terms of biological role, bifunctional serine/threonine kinase and phosphorylase involved in the regulation of the phosphoenolpyruvate synthase (PEPS) by catalyzing its phosphorylation/dephosphorylation. This is Putative phosphoenolpyruvate synthase regulatory protein from Bordetella pertussis (strain Tohama I / ATCC BAA-589 / NCTC 13251).